Consider the following 215-residue polypeptide: MOB kinase activator-like 1A (215 aa).

The disordered stretch occupies residues 1 to 29 (MSLFGLGSRNQKTFRPKKSAPTGSKGAQL). The Zn(2+) site is built by Cys-80, Cys-85, His-162, and His-167.

This sequence belongs to the MOB1/phocein family. In terms of tissue distribution, isoform 1 is constitutively expressed. Isoform 2 is specifically expressed in flowers bud during sporogenesis and gametogenesis.

The protein localises to the cytoplasm. It is found in the cytoskeleton. Its subcellular location is the phragmoplast. The sequence is that of MOB kinase activator-like 1A from Medicago sativa subsp. falcata (Sickle medic).